The chain runs to 441 residues: Velvet complex subunit B (441 aa).

Polar residues-rich tracts occupy residues 1-14 (MNPG…QPGH) and 60-75 (MMQQ…STTE). The segment at 1–104 (MNPGYSSTAS…QPHVGEQDGR (104 aa)) is disordered. One can recognise a Velvet domain in the interval 100–426 (EQDGRKYRLD…AGQGIKIPIR (327 aa)).

The protein belongs to the velvet family. VelB subfamily. Component of the heterotrimeric velvet complex composed of LAEA, VEA and VELB; VEA acting as a bridging protein between LAEA and VELB. Forms a heterodimeric complex with VOSA; the formation of the VELB-VOSA complex is light-dependent.

The protein localises to the nucleus. It is found in the cytoplasm. Its function is as follows. Component of the velvet transcription factor complex that controls sexual/asexual developmental ratio in response to light, promoting sexual development in the darkness while stimulating asexual sporulation under illumination. The velvet complex acts as a global regulator for secondary metabolite gene expression. Component of the VELB-VOSA heterodimeric complex that plays a dual role in activating genes associated with spore maturation and repressing certain development-associated genes. The VELB-VOSA complex binds DNA through the DNA-binding domain of VOSA that recognizes an 11-nucleotide consensus sequence 5'-CTGGCCGCGGC-3' consisting of two motifs in the promoters of key developmental regulatory genes. Involved in the regulation of the response to eactive oxygen species (ROS) stress. The polypeptide is Velvet complex subunit B (Pyricularia oryzae (strain 70-15 / ATCC MYA-4617 / FGSC 8958) (Rice blast fungus)).